A 175-amino-acid chain; its full sequence is Pathogenesis-related protein 1A1 (175 aa).

The N-terminal stretch at 1 to 21 (MKSSIFVACFITFIIFHSSQA) is a signal peptide. One can recognise an SCP domain in the interval 29–146 (LNAHNAARRR…SGWVFITCNY (118 aa)). 3 cysteine pairs are disulfide-bonded: C65-C135, C108-C114, and C130-C144.

It belongs to the CRISP family.

Functionally, probably involved in the defense reaction of plants against pathogens. This is Pathogenesis-related protein 1A1 from Solanum lycopersicum (Tomato).